We begin with the raw amino-acid sequence, 280 residues long: uncharacterized protein (280 aa).

3 helical membrane-spanning segments follow: residues 10–29 (IQQN…LLFN), 164–186 (FVFV…FAFI), and 209–228 (IFGL…YFLL).

The protein localises to the cell membrane. This is an uncharacterized protein from Bacillus subtilis (strain 168).